The primary structure comprises 83 residues: Urotensin-2 (83 aa).

Residues 49–71 constitute a propeptide that is removed on maturation; it reads EVLLEKQSLLNPFSRVFGIRKQF. A disulfide bridge connects residues Cys-77 and Cys-82.

The protein belongs to the urotensin-2 family.

It is found in the secreted. In terms of biological role, urotensin is found in the teleost caudal neurosecretory system. It has a suggested role in osmoregulation and as a corticotropin-releasing factor. The non-hormonal portion of this precursor may be a urotensin binding protein, urophysin. In Platichthys flesus (European flounder), this protein is Urotensin-2.